The sequence spans 99 residues: Large ribosomal subunit protein bL21 (99 aa).

This sequence belongs to the bacterial ribosomal protein bL21 family. Part of the 50S ribosomal subunit. Contacts protein L20.

Its function is as follows. This protein binds to 23S rRNA in the presence of protein L20. This is Large ribosomal subunit protein bL21 from Neorickettsia sennetsu (strain ATCC VR-367 / Miyayama) (Ehrlichia sennetsu).